The sequence spans 339 residues: Glyceraldehyde-3-phosphate dehydrogenase (339 aa).

Residues 13-14, aspartate 35, and lysine 84 contribute to the NAD(+) site; that span reads RI. D-glyceraldehyde 3-phosphate is bound by residues 156–158, threonine 187, 216–217, and arginine 239; these read SCT and TG. Catalysis depends on cysteine 157, which acts as the Nucleophile. Position 321 (asparagine 321) interacts with NAD(+).

Belongs to the glyceraldehyde-3-phosphate dehydrogenase family. As to quaternary structure, homotetramer.

It localises to the cytoplasm. It catalyses the reaction D-glyceraldehyde 3-phosphate + phosphate + NAD(+) = (2R)-3-phospho-glyceroyl phosphate + NADH + H(+). It participates in carbohydrate degradation; glycolysis; pyruvate from D-glyceraldehyde 3-phosphate: step 1/5. This Brugia malayi (Filarial nematode worm) protein is Glyceraldehyde-3-phosphate dehydrogenase (G3PD).